The chain runs to 559 residues: MPVINFTYEELFEQLGEELPKDELINILPMISSDVESYDDVEVKAEFFPNRPDYYSVEGIVRSLKGYLELEKGIPEYDVKKTDTTITVDSELENIRPYVACCMIKNVKIDDNQLRNIMEFQEHLHWVIGRDRKKVAIGIHDLDKVEGPFYYKAGNPNETSFIPLESRENLTLNEILENHEKGEKYAKLLKEFDKYPLIVDGNGNIMSMPPIINSELTKLTTKTTNLFIDVTGTDINAVTNALNIIAANLSENGATIETIEVNYPYHDNKTYPDFEPKIIDVHTKTAQEYIGIDLTADKIVETLEKTRFNATKINEETVRVTVPRYRIDILHEVDIIENIALGYGFNELPAQLPDFATVANPDSKRQFDQILEQVMIGLSFTEIKSLMLTSETQHYTKLRKEVEEDRVTVAQPITQDRTMIRKSLINSLLEFLEDNKHEELPQKIFEIGDVAYINENAETKMVTVKKLAAAQISSVANFTTIKSIVESFVANMGFEMELEDHDDSAFIKGRCAKFTTKPLNKNTPFTFKGYFGEIHPEVLTNFELEYPVIAFEVEFSEVE.

Residues 274-350 (FEPKIIDVHT…LGYGFNELPA (77 aa)) enclose the B5 domain. Mg(2+)-binding residues include aspartate 328, aspartate 334, glutamate 337, and asparagine 338.

Belongs to the phenylalanyl-tRNA synthetase beta subunit family. Type 2 subfamily. In terms of assembly, tetramer of two alpha and two beta subunits. Requires Mg(2+) as cofactor.

The protein localises to the cytoplasm. The enzyme catalyses tRNA(Phe) + L-phenylalanine + ATP = L-phenylalanyl-tRNA(Phe) + AMP + diphosphate + H(+). The polypeptide is Phenylalanine--tRNA ligase beta subunit (Methanosphaera stadtmanae (strain ATCC 43021 / DSM 3091 / JCM 11832 / MCB-3)).